The primary structure comprises 340 residues: DNA-directed RNA polymerase subunit alpha (340 aa).

Residues 1–226 are alpha N-terminal domain (alpha-NTD); it reads MLIAQRPSLT…ELFGLARELN (226 aa). The interval 243 to 340 is alpha C-terminal domain (alpha-CTD); it reads LAADLALPIE…DAGFVETEQY (98 aa).

It belongs to the RNA polymerase alpha chain family. As to quaternary structure, homodimer. The RNAP catalytic core consists of 2 alpha, 1 beta, 1 beta' and 1 omega subunit. When a sigma factor is associated with the core the holoenzyme is formed, which can initiate transcription.

The enzyme catalyses RNA(n) + a ribonucleoside 5'-triphosphate = RNA(n+1) + diphosphate. Functionally, DNA-dependent RNA polymerase catalyzes the transcription of DNA into RNA using the four ribonucleoside triphosphates as substrates. This chain is DNA-directed RNA polymerase subunit alpha, found in Streptomyces avermitilis (strain ATCC 31267 / DSM 46492 / JCM 5070 / NBRC 14893 / NCIMB 12804 / NRRL 8165 / MA-4680).